We begin with the raw amino-acid sequence, 360 residues long: Phosphoserine aminotransferase (360 aa).

Arg42 is a binding site for L-glutamate. Pyridoxal 5'-phosphate-binding residues include Trp102, Thr152, Asp171, and Gln194. Lys195 carries the post-translational modification N6-(pyridoxal phosphate)lysine. Position 237–238 (237–238 (NT)) interacts with pyridoxal 5'-phosphate.

It belongs to the class-V pyridoxal-phosphate-dependent aminotransferase family. SerC subfamily. In terms of assembly, homodimer. Pyridoxal 5'-phosphate is required as a cofactor.

It is found in the cytoplasm. It carries out the reaction O-phospho-L-serine + 2-oxoglutarate = 3-phosphooxypyruvate + L-glutamate. It catalyses the reaction 4-(phosphooxy)-L-threonine + 2-oxoglutarate = (R)-3-hydroxy-2-oxo-4-phosphooxybutanoate + L-glutamate. It functions in the pathway amino-acid biosynthesis; L-serine biosynthesis; L-serine from 3-phospho-D-glycerate: step 2/3. It participates in cofactor biosynthesis; pyridoxine 5'-phosphate biosynthesis; pyridoxine 5'-phosphate from D-erythrose 4-phosphate: step 3/5. In terms of biological role, catalyzes the reversible conversion of 3-phosphohydroxypyruvate to phosphoserine and of 3-hydroxy-2-oxo-4-phosphonooxybutanoate to phosphohydroxythreonine. The sequence is that of Phosphoserine aminotransferase from Coxiella burnetii (strain Dugway 5J108-111).